The primary structure comprises 601 residues: Sodium-dependent phosphate transport protein 2C (601 aa).

Residues 1-75 lie on the Cytoplasmic side of the membrane; sequence MPNSLAGDQV…HQVVSGFLKA (75 aa). Ser-4 carries the phosphoserine modification. Residues 76–96 traverse the membrane as a helical segment; it reads CGLLGSLYFFICSLDILSSAF. The Extracellular portion of the chain corresponds to 97-110; sequence QLLGSKMAGDIFKD. Residues 111 to 131 form a helical membrane-spanning segment; sequence NVVLSNPVAGLVIGVVVTVLV. Residues 132–187 are Cytoplasmic-facing; sequence QSSSTSSSIVVSMVASKSLTVQASVPIIMGVNVGTSITSTLVSMAQSGDRDEFQRA. The chain crosses the membrane as a helical span at residues 188 to 208; that stretch reads FGGSAVHGIFNWLTVLVLLPL. Residues 209 to 324 lie on the Extracellular side of the membrane; it reads ENATAALERL…FAGSELTDLA (116 aa). N-linked (GlcNAc...) asparagine glycosylation is found at Asn-210, Asn-264, Asn-267, and Asn-299. The cysteines at positions 275 and 311 are disulfide-linked. A helical transmembrane segment spans residues 325 to 345; sequence VGFILLAGSLLVLCVCLVLIV. The Cytoplasmic segment spans residues 346 to 369; the sequence is KLLNSVLRGRIAQAVKTVINADFP. A helical transmembrane segment spans residues 370 to 390; it reads FPFGWLSGYLAILVGAGLTFL. The Extracellular segment spans residues 391–447; it reads LQSSSVFTAAIVPLMGVGVINLERAYPLFLGSNIGTTTTALLAALASPADTLLFAVQ. The chain crosses the membrane as a helical span at residues 448–468; it reads VALIHFFFNLAGILLWYLVPV. The Cytoplasmic segment spans residues 469-487; the sequence is LRLPIPLAKRFGDLTAQYR. Residues 488–508 traverse the membrane as a helical segment; sequence WVAIVYLLLTFLLLPLAAFGL. The Extracellular segment spans residues 509–512; it reads SLAG. Residues 513-533 form a helical membrane-spanning segment; it reads GSVLAAVGGPLVGLVLLIILV. At 534 to 601 the chain is on the cytoplasmic side; the sequence is NVLQRHRPSW…NPQVIASQQL (68 aa).

This sequence belongs to the SLC34A transporter family. Highly expressed in the kidney. Not found in any of the other tested tissues.

It localises to the apical cell membrane. The catalysed reaction is 2 Na(+)(out) + phosphate(out) = 2 Na(+)(in) + phosphate(in). Involved in actively transporting phosphate into cells via Na(+) cotransport in the renal brush border membrane. The cotransport has a Na(+):Pi stoichiometry of 2:1 and is electroneutral. This Rattus norvegicus (Rat) protein is Sodium-dependent phosphate transport protein 2C (Slc34a3).